Reading from the N-terminus, the 149-residue chain is Arginine repressor (149 aa).

This sequence belongs to the ArgR family.

It is found in the cytoplasm. The protein operates within amino-acid biosynthesis; L-arginine biosynthesis [regulation]. Its function is as follows. Regulates arginine biosynthesis genes. In Geobacillus kaustophilus (strain HTA426), this protein is Arginine repressor.